The following is a 474-amino-acid chain: Glutamate--tRNA ligase (474 aa).

The 'HIGH' region motif lies at P10–G20. Zn(2+)-binding residues include C107, C109, C134, and D136. The 'KMSKS' region motif lies at R244–R248. Position 247 (K247) interacts with ATP.

The protein belongs to the class-I aminoacyl-tRNA synthetase family. Glutamate--tRNA ligase type 1 subfamily. In terms of assembly, monomer. Requires Zn(2+) as cofactor.

It is found in the cytoplasm. The catalysed reaction is tRNA(Glu) + L-glutamate + ATP = L-glutamyl-tRNA(Glu) + AMP + diphosphate. Catalyzes the attachment of glutamate to tRNA(Glu) in a two-step reaction: glutamate is first activated by ATP to form Glu-AMP and then transferred to the acceptor end of tRNA(Glu). This is Glutamate--tRNA ligase from Anaeromyxobacter dehalogenans (strain 2CP-C).